The chain runs to 482 residues: tRNA sulfurtransferase (482 aa).

Residues 61-165 (EAIRDALTRI…QDRLLLIKSR (105 aa)) form the THUMP domain. ATP contacts are provided by residues 183 to 184 (LI), Lys-265, Gly-287, and Gln-296. A disulfide bond links Cys-344 and Cys-456. The Rhodanese domain occupies 404–482 (FVPTDVLLDI…GFSNVKVYRP (79 aa)). Catalysis depends on Cys-456, which acts as the Cysteine persulfide intermediate.

This sequence belongs to the ThiI family.

It localises to the cytoplasm. The catalysed reaction is [ThiI sulfur-carrier protein]-S-sulfanyl-L-cysteine + a uridine in tRNA + 2 reduced [2Fe-2S]-[ferredoxin] + ATP + H(+) = [ThiI sulfur-carrier protein]-L-cysteine + a 4-thiouridine in tRNA + 2 oxidized [2Fe-2S]-[ferredoxin] + AMP + diphosphate. It carries out the reaction [ThiS sulfur-carrier protein]-C-terminal Gly-Gly-AMP + S-sulfanyl-L-cysteinyl-[cysteine desulfurase] + AH2 = [ThiS sulfur-carrier protein]-C-terminal-Gly-aminoethanethioate + L-cysteinyl-[cysteine desulfurase] + A + AMP + 2 H(+). It participates in cofactor biosynthesis; thiamine diphosphate biosynthesis. In terms of biological role, catalyzes the ATP-dependent transfer of a sulfur to tRNA to produce 4-thiouridine in position 8 of tRNAs, which functions as a near-UV photosensor. Also catalyzes the transfer of sulfur to the sulfur carrier protein ThiS, forming ThiS-thiocarboxylate. This is a step in the synthesis of thiazole, in the thiamine biosynthesis pathway. The sulfur is donated as persulfide by IscS. This chain is tRNA sulfurtransferase, found in Pectobacterium atrosepticum (strain SCRI 1043 / ATCC BAA-672) (Erwinia carotovora subsp. atroseptica).